Reading from the N-terminus, the 204-residue chain is Probable GTP-binding protein EngB (204 aa).

In terms of domain architecture, EngB-type G spans Thr-23–Met-195. Residues Gly-31–Ser-38, Gly-58–Glu-62, Asp-76–Gly-79, Thr-143–Asp-146, and Phe-174–Ala-176 each bind GTP. Mg(2+) is bound by residues Ser-38 and Thr-60.

The protein belongs to the TRAFAC class TrmE-Era-EngA-EngB-Septin-like GTPase superfamily. EngB GTPase family. Requires Mg(2+) as cofactor.

Functionally, necessary for normal cell division and for the maintenance of normal septation. In Gemmatimonas aurantiaca (strain DSM 14586 / JCM 11422 / NBRC 100505 / T-27), this protein is Probable GTP-binding protein EngB.